The sequence spans 150 residues: Endoribonuclease YbeY (150 aa).

Residues histidine 116, histidine 120, and histidine 126 each contribute to the Zn(2+) site.

This sequence belongs to the endoribonuclease YbeY family. The cofactor is Zn(2+).

It localises to the cytoplasm. Single strand-specific metallo-endoribonuclease involved in late-stage 70S ribosome quality control and in maturation of the 3' terminus of the 16S rRNA. This is Endoribonuclease YbeY from Beutenbergia cavernae (strain ATCC BAA-8 / DSM 12333 / CCUG 43141 / JCM 11478 / NBRC 16432 / NCIMB 13614 / HKI 0122).